The chain runs to 292 residues: 4-hydroxy-tetrahydrodipicolinate synthase (292 aa).

Thr45 is a pyruvate binding site. The active-site Proton donor/acceptor is Tyr133. The active-site Schiff-base intermediate with substrate is Lys161. Pyruvate is bound at residue Ile203.

This sequence belongs to the DapA family. As to quaternary structure, homotetramer; dimer of dimers.

Its subcellular location is the cytoplasm. The enzyme catalyses L-aspartate 4-semialdehyde + pyruvate = (2S,4S)-4-hydroxy-2,3,4,5-tetrahydrodipicolinate + H2O + H(+). Its pathway is amino-acid biosynthesis; L-lysine biosynthesis via DAP pathway; (S)-tetrahydrodipicolinate from L-aspartate: step 3/4. Its function is as follows. Catalyzes the condensation of (S)-aspartate-beta-semialdehyde [(S)-ASA] and pyruvate to 4-hydroxy-tetrahydrodipicolinate (HTPA). This chain is 4-hydroxy-tetrahydrodipicolinate synthase, found in Aromatoleum aromaticum (strain DSM 19018 / LMG 30748 / EbN1) (Azoarcus sp. (strain EbN1)).